The sequence spans 509 residues: ATP synthase subunit alpha (509 aa).

Residue 169-176 (GDRQTGKT) participates in ATP binding.

This sequence belongs to the ATPase alpha/beta chains family. In terms of assembly, F-type ATPases have 2 components, CF(1) - the catalytic core - and CF(0) - the membrane proton channel. CF(1) has five subunits: alpha(3), beta(3), gamma(1), delta(1), epsilon(1). CF(0) has three main subunits: a(1), b(2) and c(9-12). The alpha and beta chains form an alternating ring which encloses part of the gamma chain. CF(1) is attached to CF(0) by a central stalk formed by the gamma and epsilon chains, while a peripheral stalk is formed by the delta and b chains.

The protein localises to the cell inner membrane. It catalyses the reaction ATP + H2O + 4 H(+)(in) = ADP + phosphate + 5 H(+)(out). Functionally, produces ATP from ADP in the presence of a proton gradient across the membrane. The alpha chain is a regulatory subunit. This is ATP synthase subunit alpha from Brucella melitensis biotype 1 (strain ATCC 23456 / CCUG 17765 / NCTC 10094 / 16M).